The sequence spans 84 residues: Toxin Cll9 (84 aa).

A signal peptide spans 1-19; sequence MNSLLMITACLILIGTVWA. Residues 20–83 form the LCN-type CS-alpha/beta domain; the sequence is EDGYLFDKRK…ISRTPGKTCK (64 aa). 4 cysteine pairs are disulfide-bonded: cysteine 31/cysteine 82, cysteine 35/cysteine 58, cysteine 44/cysteine 63, and cysteine 48/cysteine 65.

In terms of tissue distribution, expressed by the venom gland.

It is found in the secreted. Its function is as follows. Beta toxins bind voltage-independently at site-4 of sodium channels (Nav) and shift the voltage of activation toward more negative potentials thereby affecting sodium channel activation and promoting spontaneous and repetitive firing. Has some action on peripheral ganglia, but not on other sodium channels such as those from cerebellum granular cells in culture. Induces sleep, suggesting a strong antiepileptic action. This is Toxin Cll9 from Centruroides limpidus (Mexican scorpion).